Here is a 29-residue protein sequence, read N- to C-terminus: Glucagon (29 aa).

The protein belongs to the glucagon family.

It is found in the secreted. Functionally, glucagon plays a key role in glucose metabolism and homeostasis. Regulates blood glucose by increasing gluconeogenesis and decreasing glycolysis. The chain is Glucagon (gcg) from Lampetra fluviatilis (European river lamprey).